The sequence spans 441 residues: Glutamyl-tRNA reductase (441 aa).

Substrate is bound by residues 58-61 (TCNR), serine 116, 121-123 (EPD), and glutamine 127. Cysteine 59 serves as the catalytic Nucleophile. 195–200 (GAGMAG) contacts NADP(+).

It belongs to the glutamyl-tRNA reductase family. In terms of assembly, homodimer.

It catalyses the reaction (S)-4-amino-5-oxopentanoate + tRNA(Glu) + NADP(+) = L-glutamyl-tRNA(Glu) + NADPH + H(+). It functions in the pathway porphyrin-containing compound metabolism; protoporphyrin-IX biosynthesis; 5-aminolevulinate from L-glutamyl-tRNA(Glu): step 1/2. In terms of biological role, catalyzes the NADPH-dependent reduction of glutamyl-tRNA(Glu) to glutamate 1-semialdehyde (GSA). In Ignicoccus hospitalis (strain KIN4/I / DSM 18386 / JCM 14125), this protein is Glutamyl-tRNA reductase.